Reading from the N-terminus, the 60-residue chain is Large ribosomal subunit protein uL30 (60 aa).

Belongs to the universal ribosomal protein uL30 family. In terms of assembly, part of the 50S ribosomal subunit.

This is Large ribosomal subunit protein uL30 from Dechloromonas aromatica (strain RCB).